The following is a 331-amino-acid chain: tRNA N6-adenosine threonylcarbamoyltransferase (331 aa).

Residues His-108, His-112, and Tyr-129 each coordinate a divalent metal cation. Substrate is bound by residues 129 to 133 (YASGG), Asp-161, Gly-176, Glu-180, and Asn-261. Residue Asp-289 participates in a divalent metal cation binding.

The protein belongs to the KAE1 / TsaD family. Component of the EKC/KEOPS complex composed of at least BUD32, CGI121, GON7, KAE1 and PCC1; the whole complex dimerizes. A divalent metal cation is required as a cofactor.

It localises to the cytoplasm. Its subcellular location is the nucleus. The enzyme catalyses L-threonylcarbamoyladenylate + adenosine(37) in tRNA = N(6)-L-threonylcarbamoyladenosine(37) in tRNA + AMP + H(+). In terms of biological role, component of the EKC/KEOPS complex that is required for the formation of a threonylcarbamoyl group on adenosine at position 37 (t(6)A37) in tRNAs that read codons beginning with adenine. The complex is probably involved in the transfer of the threonylcarbamoyl moiety of threonylcarbamoyl-AMP (TC-AMP) to the N6 group of A37. KAE1 likely plays a direct catalytic role in this reaction, but requires other protein(s) of the complex to fulfill this activity. The EKC/KEOPS complex also promotes both telomere uncapping and telomere elongation. The complex is required for efficient recruitment of transcriptional coactivators. This is tRNA N6-adenosine threonylcarbamoyltransferase from Encephalitozoon cuniculi (strain GB-M1) (Microsporidian parasite).